The following is a 196-amino-acid chain: Serine recombinase PinR (196 aa).

The Resolvase/invertase-type recombinase catalytic domain maps to 3–143; sequence RIFAYCRIST…SGIVRARGAG (141 aa). Residue Ser11 is the O-(5'-phospho-DNA)-serine intermediate of the active site.

The protein belongs to the site-specific recombinase resolvase family.

The polypeptide is Serine recombinase PinR (pinR) (Escherichia coli (strain K12)).